A 64-amino-acid polypeptide reads, in one-letter code: Cytochrome c oxidase subunit 5C-2 (64 aa).

The helical transmembrane segment at 15–34 threads the bilayer; that stretch reads SVVKELIIGLTLGLAAGGLW.

The protein belongs to the cytochrome c oxidase subunit 5C family.

The protein resides in the mitochondrion inner membrane. Functionally, this protein is one of the nuclear-coded polypeptide chains of cytochrome c oxidase, the terminal oxidase in mitochondrial electron transport. The protein is Cytochrome c oxidase subunit 5C-2 of Arabidopsis thaliana (Mouse-ear cress).